The chain runs to 225 residues: Guanylate kinase (225 aa).

The 179-residue stretch at 20-198 (GNLFMVVAPS…ALSELQCLVA (179 aa)) folds into the Guanylate kinase-like domain. Residue 27-34 (APSGAGKS) coordinates ATP.

This sequence belongs to the guanylate kinase family.

The protein resides in the cytoplasm. The catalysed reaction is GMP + ATP = GDP + ADP. Essential for recycling GMP and indirectly, cGMP. This chain is Guanylate kinase, found in Paraburkholderia xenovorans (strain LB400).